A 564-amino-acid chain; its full sequence is Membrane protein insertase YidC (564 aa).

A helical membrane pass occupies residues 7-24 (VLWVVFSFSLLMLWDNYN). Low complexity predominate over residues 43–60 (KPAAATDDGKTAAAPTAD). Residues 43–76 (KPAAATDDGKTAAAPTADVPTSSAHAANATGVPD) form a disordered region. Transmembrane regions (helical) follow at residues 293 to 313 (LATN…APGA), 341 to 361 (VKDY…MIQI), 364 to 384 (LLGN…LAFF), 438 to 458 (MPIV…LASV), 483 to 503 (IGSF…SMFI), and 524 to 544 (PIAF…YWVV).

It belongs to the OXA1/ALB3/YidC family. Type 1 subfamily. In terms of assembly, interacts with the Sec translocase complex via SecD. Specifically interacts with transmembrane segments of nascent integral membrane proteins during membrane integration.

Its subcellular location is the cell inner membrane. Its function is as follows. Required for the insertion and/or proper folding and/or complex formation of integral membrane proteins into the membrane. Involved in integration of membrane proteins that insert both dependently and independently of the Sec translocase complex, as well as at least some lipoproteins. Aids folding of multispanning membrane proteins. The sequence is that of Membrane protein insertase YidC from Janthinobacterium sp. (strain Marseille) (Minibacterium massiliensis).